The sequence spans 723 residues: Probable C-mannosyltransferase DPY19L4 (723 aa).

Residues 1–33 (MAEEEGPPVELRQRKKPKSSENKESAKEEKISD) are disordered. At Ala2 the chain carries N-acetylalanine. Residues 18–32 (KSSENKESAKEEKIS) are compositionally biased toward basic and acidic residues. The next 12 helical transmembrane spans lie at 52–72 (IFIGCLAAVTSGMMYALYLSA), 161–178 (VYFYIGIVFGLQGIYVTA), 184–202 (WLMSGTWLAGMLTVAWFVI), 222–240 (LPYFACQIAALTGYLKSNL), 260–280 (MMMWEYSHYLLFLQAISLFLL), 292–310 (YEVYKIYIFSLFLGYLLQF), 316–337 (LVSPLLSLVAALMLAKCLQLNV), 349–370 (VINFYLVCTLTITLNIIMKMFV), 421–441 (LLPFYILVLIICFLSMLQVIF), 466–486 (IIYHVIHTILLGSLAMVIEGL), 489–509 (IWIPYVCMLAAFGVCSPELWM), and 522–542 (PILLALILSMAVPTIIGLSLW).

It belongs to the dpy-19 family. As to expression, widely expressed.

It localises to the membrane. In terms of biological role, probable C-mannosyltransferase that mediates C-mannosylation of tryptophan residues on target proteins. The polypeptide is Probable C-mannosyltransferase DPY19L4 (DPY19L4) (Homo sapiens (Human)).